Consider the following 84-residue polypeptide: Kappa-scoloptoxin(11)-Ssm3a (84 aa).

A signal peptide spans 1–16 (MSWMFYSFIVFTLAIK).

Belongs to the scoloptoxin-11 family. Contains 2 disulfide bonds. In terms of tissue distribution, expressed by the venom gland.

It localises to the secreted. Functionally, inhibits voltage-gated potassium channel currents in DRG neurons. 200 nM of the toxin inhibits current amplitude by only 25% and even at concentrations up to 5 uM, the toxin does not inhibit all potassium currents. In vivo, insects injected with this toxin showed signs of neurotoxicity including twitching, paralysis, and body contraction. The chain is Kappa-scoloptoxin(11)-Ssm3a from Scolopendra mutilans (Chinese red-headed centipede).